We begin with the raw amino-acid sequence, 324 residues long: Uric acid degradation bifunctional protein TTL (324 aa).

N-acetylalanine is present on A2. Residues 2 to 29 (AMEIGEDEWKVCCGSSEFAKQMSTSGPL) are required for BRI1-binding. An OHCU decarboxylase region spans residues 2–161 (AMEIGEDEWK…LRMAKLFSDK (160 aa)). H58 functions as the Proton donor; for OHCU decarboxylase activity in the catalytic mechanism. Residues H58, P59, E80, F111, I113, and A115 each coordinate (S)-allantoin. The interval 178-324 (KPQDRLRIIG…PFSFSTYRGS (147 aa)) is HIU hydrolase. The Internal peroxisomal targeting signal (PTS2) motif lies at 182–190 (RLRIIGGHL).

It in the N-terminal section; belongs to the OHCU decarboxylase family. The protein in the C-terminal section; belongs to the transthyretin family. 5-hydroxyisourate hydrolase subfamily. As to quaternary structure, homodimer. Forms tetramers. Interacts with BRI1 in a kinase-dependent manner. Interacts with B1L. Post-translationally, phosphorylated by BRI1 in vitro. Expressed ubiquitously with highest levels in flowers buds and elongating inflorescences. As to expression, mainly expressed in stems and leaves, and, to a lower extent, in flowers, flower buds and seedlings. In terms of tissue distribution, strongly expressed in flower buds and leaves, to a lower extent in stems, and at low levels in seedlings and flowers.

The protein resides in the cell membrane. It localises to the peroxisome. Its subcellular location is the cytoplasm. It is found in the cytosol. It carries out the reaction 5-hydroxyisourate + H2O = 5-hydroxy-2-oxo-4-ureido-2,5-dihydro-1H-imidazole-5-carboxylate + H(+). The enzyme catalyses 5-hydroxy-2-oxo-4-ureido-2,5-dihydro-1H-imidazole-5-carboxylate + H(+) = (S)-allantoin + CO2. Its pathway is purine metabolism; urate degradation; (S)-allantoin from urate: step 2/3. It participates in purine metabolism; urate degradation; (S)-allantoin from urate: step 3/3. Its function is as follows. Involved in the last two steps of the degradation of uric acid, i.e. the hydrolysis of 5-hydroxyisourate (HIU) to 2-oxo-4-hydroxy-4-carboxy-5-ureidoimidazoline (OHCU) and its stereoselective decarboxylation to (S)-allantoin, a major ureide compound. Might function as a negative regulator to modulate brassinosteroid-mediated plant growth. Together with B1L, prevents plant growth and development, but by opposition to B1L, negatively regulates cold tolerance, probably in a brassinosteroid (BR) and allantoin-dependent manner. This Arabidopsis thaliana (Mouse-ear cress) protein is Uric acid degradation bifunctional protein TTL.